A 318-amino-acid chain; its full sequence is NADH-ubiquinone oxidoreductase chain 1 (318 aa).

8 helical membrane-spanning segments follow: residues 3–23 (LITLLSTIVPILLAVAFLTLV), 70–90 (MFIIAPILALALALTMWTPLP), 100–120 (LGILFMLAMSSLAVYAILWSG), 146–166 (LAIILLSILLMSGSYSLTTLI), 171–191 (YIWLILPSWPLTMMWFISTLA), 222–242 (LFFLAEYANIIMMNALTTILF), 254–273 (LYTTNFATKTLLLTMSFLWI), and 294–314 (LPLTLALCMWYVTMPIMLASI).

Belongs to the complex I subunit 1 family.

Its subcellular location is the mitochondrion inner membrane. The enzyme catalyses a ubiquinone + NADH + 5 H(+)(in) = a ubiquinol + NAD(+) + 4 H(+)(out). In terms of biological role, core subunit of the mitochondrial membrane respiratory chain NADH dehydrogenase (Complex I) that is believed to belong to the minimal assembly required for catalysis. Complex I functions in the transfer of electrons from NADH to the respiratory chain. The immediate electron acceptor for the enzyme is believed to be ubiquinone. This Phyllostomus elongatus (Lesser spear-nosed bat) protein is NADH-ubiquinone oxidoreductase chain 1 (MT-ND1).